The following is a 307-amino-acid chain: Aspartate carbamoyltransferase catalytic subunit (307 aa).

The carbamoyl phosphate site is built by R59 and T60. K87 provides a ligand contact to L-aspartate. Carbamoyl phosphate contacts are provided by R109, H137, and Q140. L-aspartate-binding residues include R173 and R223. Carbamoyl phosphate-binding residues include G266 and P267.

Belongs to the aspartate/ornithine carbamoyltransferase superfamily. ATCase family. As to quaternary structure, heterododecamer (2C3:3R2) of six catalytic PyrB chains organized as two trimers (C3), and six regulatory PyrI chains organized as three dimers (R2).

The catalysed reaction is carbamoyl phosphate + L-aspartate = N-carbamoyl-L-aspartate + phosphate + H(+). The protein operates within pyrimidine metabolism; UMP biosynthesis via de novo pathway; (S)-dihydroorotate from bicarbonate: step 2/3. Functionally, catalyzes the condensation of carbamoyl phosphate and aspartate to form carbamoyl aspartate and inorganic phosphate, the committed step in the de novo pyrimidine nucleotide biosynthesis pathway. In Helicobacter pylori (strain HPAG1), this protein is Aspartate carbamoyltransferase catalytic subunit.